The chain runs to 267 residues: Adenosine 5'-phosphosulfate reductase (267 aa).

Residues 1 to 29 (MPPFATIPATERNSAAQHQDPSPMSQPFD) are disordered. Positions 11-25 (ERNSAAQHQDPSPMS) are enriched in polar residues. Positions 139, 140, 228, and 231 each coordinate [4Fe-4S] cluster. C256 serves as the catalytic Nucleophile; cysteine thiosulfonate intermediate.

It belongs to the PAPS reductase family. CysH subfamily. The cofactor is [4Fe-4S] cluster.

It localises to the cytoplasm. The catalysed reaction is [thioredoxin]-disulfide + sulfite + AMP + 2 H(+) = adenosine 5'-phosphosulfate + [thioredoxin]-dithiol. It functions in the pathway sulfur metabolism; hydrogen sulfide biosynthesis; sulfite from sulfate. Catalyzes the formation of sulfite from adenosine 5'-phosphosulfate (APS) using thioredoxin as an electron donor. The protein is Adenosine 5'-phosphosulfate reductase of Pseudomonas aeruginosa (strain LESB58).